Here is a 256-residue protein sequence, read N- to C-terminus: Probable S-methyl-5'-thioinosine phosphorylase (256 aa).

Residues T10 and R47–H48 contribute to the phosphate site. M178 is a binding site for substrate. T179 contacts phosphate. Residue N202 to A204 coordinates substrate.

The protein belongs to the PNP/MTAP phosphorylase family. MTAP subfamily. As to quaternary structure, homotrimer.

The enzyme catalyses S-methyl-5'-thioinosine + phosphate = 5-(methylsulfanyl)-alpha-D-ribose 1-phosphate + hypoxanthine. The protein operates within purine metabolism; purine nucleoside salvage. Its function is as follows. Catalyzes the reversible phosphorylation of S-methyl-5'-thioinosine (MTI) to hypoxanthine and 5-methylthioribose-1-phosphate. Involved in the breakdown of S-methyl-5'-thioadenosine (MTA), a major by-product of polyamine biosynthesis. Catabolism of (MTA) occurs via deamination to MTI and phosphorolysis to hypoxanthine. The chain is Probable S-methyl-5'-thioinosine phosphorylase from Methanopyrus kandleri (strain AV19 / DSM 6324 / JCM 9639 / NBRC 100938).